Here is a 399-residue protein sequence, read N- to C-terminus: UDP-N-acetylglucosamine--N-acetylmuramyl-(pentapeptide) pyrophosphoryl-undecaprenol N-acetylglucosamine transferase (399 aa).

The segment at 1–31 (MTSRFGHSQHPRRGRSARARAGRREGVQSNF) is disordered. Basic residues predominate over residues 7–21 (HSQHPRRGRSARARA). UDP-N-acetyl-alpha-D-glucosamine is bound by residues 58-60 (TGG), Asn170, Arg206, Ser234, Ile288, and Gln333.

This sequence belongs to the glycosyltransferase 28 family. MurG subfamily.

Its subcellular location is the cell inner membrane. It carries out the reaction di-trans,octa-cis-undecaprenyl diphospho-N-acetyl-alpha-D-muramoyl-L-alanyl-D-glutamyl-meso-2,6-diaminopimeloyl-D-alanyl-D-alanine + UDP-N-acetyl-alpha-D-glucosamine = di-trans,octa-cis-undecaprenyl diphospho-[N-acetyl-alpha-D-glucosaminyl-(1-&gt;4)]-N-acetyl-alpha-D-muramoyl-L-alanyl-D-glutamyl-meso-2,6-diaminopimeloyl-D-alanyl-D-alanine + UDP + H(+). Its pathway is cell wall biogenesis; peptidoglycan biosynthesis. Its function is as follows. Cell wall formation. Catalyzes the transfer of a GlcNAc subunit on undecaprenyl-pyrophosphoryl-MurNAc-pentapeptide (lipid intermediate I) to form undecaprenyl-pyrophosphoryl-MurNAc-(pentapeptide)GlcNAc (lipid intermediate II). In Acidovorax sp. (strain JS42), this protein is UDP-N-acetylglucosamine--N-acetylmuramyl-(pentapeptide) pyrophosphoryl-undecaprenol N-acetylglucosamine transferase.